The primary structure comprises 256 residues: 5'-nucleotidase SurE (256 aa).

Positions 8, 9, 40, and 92 each coordinate a divalent metal cation.

The protein belongs to the SurE nucleotidase family. A divalent metal cation serves as cofactor.

Its subcellular location is the cytoplasm. It carries out the reaction a ribonucleoside 5'-phosphate + H2O = a ribonucleoside + phosphate. In terms of biological role, nucleotidase that shows phosphatase activity on nucleoside 5'-monophosphates. This chain is 5'-nucleotidase SurE, found in Sinorhizobium fredii (strain NBRC 101917 / NGR234).